The following is a 109-amino-acid chain: Large ribosomal subunit protein uL1 (109 aa).

It belongs to the universal ribosomal protein uL1 family. In terms of assembly, part of the 50S ribosomal subunit.

Its function is as follows. Binds directly to 23S rRNA. The L1 stalk is quite mobile in the ribosome, and is involved in E site tRNA release. In terms of biological role, protein L1 is also a translational repressor protein, it controls the translation of the L11 operon by binding to its mRNA. This Aquifex pyrophilus protein is Large ribosomal subunit protein uL1 (rplA).